Here is a 344-residue protein sequence, read N- to C-terminus: MYAMKEEDCLQTFHNLQDYQDQFHLHHHPQILPWSSTSLPSFDPLHFPSNPTRYSDPVHYFNRRASSSSSSFDYNDGFVSPPPSMDHPQNHLRILSEALGPIMRRGSSFGFDGEIMGKLSAQEVMDAKALAASKSHSEAERRRRERINTHLAKLRSILPNTTKTDKASLLAEVIQHMKELKRQTSQITDTYQVPTECDDLTVDSSYNDEEGNLVIRASFCCQDRTDLMHDVINALKSLRLRTLKAEIATVGGRVKNILFLSREYDDEEDHDSYRRNFDGDDVEDYDEERMMNNRVSSIEEALKAVIEKCVHNNDESNDNNNLEKSSSGGIKRQRTSKMVNRCYN.

Residues 131–180 (AASKSHSEAERRRRERINTHLAKLRSILPNTTKTDKASLLAEVIQHMKEL) form the bHLH domain. Positions 313–344 (NDESNDNNNLEKSSSGGIKRQRTSKMVNRCYN) are disordered. Positions 318-327 (DNNNLEKSSS) are enriched in low complexity.

As to quaternary structure, homodimer. Interacts with LHW.

The protein localises to the nucleus. Transcription factor required for MONOPTEROS-dependent root initiation in embryo. Transcriptionally controlled by MONOPTEROS. The chain is Transcription factor AIG1 (BHLH32) from Arabidopsis thaliana (Mouse-ear cress).